Consider the following 826-residue polypeptide: Prominin-1-A (826 aa).

3 helical membrane-spanning segments follow: residues tyrosine 50 to valine 70, valine 106 to phenylalanine 126, and leucine 153 to tyrosine 173. N-linked (GlcNAc...) asparagine glycans are attached at residues asparagine 178, asparagine 268, asparagine 286, asparagine 327, asparagine 388, and asparagine 404. 2 helical membrane-spanning segments follow: residues cysteine 439–phenylalanine 459 and valine 483–alanine 503. 4 N-linked (GlcNAc...) asparagine glycosylation sites follow: asparagine 576, asparagine 582, asparagine 617, and asparagine 693.

Belongs to the prominin family.

The protein localises to the apical cell membrane. Its subcellular location is the cell projection. It is found in the microvillus membrane. The protein resides in the endoplasmic reticulum. It localises to the endoplasmic reticulum-Golgi intermediate compartment. Its function is as follows. May play a role in cell differentiation, proliferation and apoptosis. Binds cholesterol in cholesterol-containing plasma membrane microdomains and may play a role in the organization of the apical plasma membrane in epithelial cells. Involved in regulation of MAPK and Akt signaling pathways. This is Prominin-1-A (prom1a) from Danio rerio (Zebrafish).